A 555-amino-acid chain; its full sequence is Spermine oxidase (555 aa).

Residues A35, E55, R63, 79 to 80 (TW), and V261 each bind FAD. The interval 271 to 306 (ARPRGPEIEPRGEGDHNHDTGEGGQGGEEPRGGRWD) is disordered. Residues 274–291 (RGPEIEPRGEGDHNHDTG) are compositionally biased toward basic and acidic residues. Residues E519 and 528–529 (TT) each bind FAD.

The protein belongs to the flavin monoamine oxidase family. It depends on FAD as a cofactor. As to expression, widely expressed. Expressed in human tumor cell lines. Isoform 4 is only found in an embryonal kidney cell line.

The protein localises to the cytoplasm. The protein resides in the nucleus. The catalysed reaction is spermine + O2 + H2O = 3-aminopropanal + spermidine + H2O2. It participates in amine and polyamine degradation; spermine degradation. Its activity is regulated as follows. Inhibited at more than 90% by SL-11144, SL-11150 and SL-11158, at concentrations less than 1 uM. Flavoenzyme which catalyzes the oxidation of spermine to spermidine. Can also use N(1)-acetylspermine and spermidine as substrates, with different affinity depending on the isoform (isozyme) and on the experimental conditions. Plays an important role in the regulation of polyamine intracellular concentration and has the potential to act as a determinant of cellular sensitivity to the antitumor polyamine analogs. May contribute to beta-alanine production via aldehyde dehydrogenase conversion of 3-amino-propanal. The sequence is that of Spermine oxidase (SMOX) from Homo sapiens (Human).